A 71-amino-acid chain; its full sequence is Prophage lysis protein S homolog EssQ (71 aa).

Belongs to the lambda phage S protein family.

In Escherichia coli (strain K12), this protein is Prophage lysis protein S homolog EssQ (essQ).